The primary structure comprises 376 residues: DNA-directed RNA polymerase subunit alpha (376 aa).

Residues 1-259 form an alpha N-terminal domain (alpha-NTD) region; it reads MSDNSQNLLY…KHFSIFEKMD (259 aa). Residues 276 to 376 form an alpha C-terminal domain (alpha-CTD) region; it reads KDDILHKLVL…EKIRSKNVKG (101 aa).

Belongs to the RNA polymerase alpha chain family. In terms of assembly, homodimer. The RNAP catalytic core consists of 2 alpha, 1 beta, 1 beta' and 1 omega subunit. When a sigma factor is associated with the core the holoenzyme is formed, which can initiate transcription.

It catalyses the reaction RNA(n) + a ribonucleoside 5'-triphosphate = RNA(n+1) + diphosphate. Its function is as follows. DNA-dependent RNA polymerase catalyzes the transcription of DNA into RNA using the four ribonucleoside triphosphates as substrates. This is DNA-directed RNA polymerase subunit alpha from Chlamydia felis (strain Fe/C-56) (Chlamydophila felis).